A 221-amino-acid polypeptide reads, in one-letter code: MNNIVLILKMISKHYKQGNTIVRVLDGLNLTANEGELIAIIGSSGSGKSTLLHIAGLLDKPTNGQVIIPNIKYKKYHLIRLYYLGFIYQQHHLLKDFTALENVIIPRLIRGLDQKEAIKDATKILDDLGLEKKLYNMPGELSGGEQQRVAIARSLINKPRIILADEPTGNLDPNTTNEVFNLFLKVARKQNTTVIMVTHNHELAHKMDKLYNLKHGLLNIA.

One can recognise an ABC transporter domain in the interval 8–220 (LKMISKHYKQ…YNLKHGLLNI (213 aa)). 42–49 (GSSGSGKS) provides a ligand contact to ATP.

This sequence belongs to the ABC transporter superfamily. Lipoprotein translocase (TC 3.A.1.125) family. In terms of assembly, the complex is composed of two ATP-binding proteins (LolD) and two transmembrane proteins (LolC and LolE).

It is found in the cell inner membrane. Part of the ABC transporter complex LolCDE involved in the translocation of mature outer membrane-directed lipoproteins, from the inner membrane to the periplasmic chaperone, LolA. Responsible for the formation of the LolA-lipoprotein complex in an ATP-dependent manner. In Rickettsia prowazekii (strain Madrid E), this protein is Lipoprotein-releasing system ATP-binding protein LolD.